A 562-amino-acid chain; its full sequence is Arylsulfatase H (562 aa).

3 residues coordinate Ca(2+): aspartate 15, aspartate 16, and cysteine 55. The active-site Nucleophile is the cysteine 55. 3-oxoalanine (Cys) is present on cysteine 55. Lysine 115 contacts substrate. The active site involves histidine 117. 2 helical membrane-spanning segments follow: residues 167 to 187 (LWIS…PKFA) and 189 to 209 (WFSV…LFFT). Substrate is bound at residue histidine 271. Ca(2+) contacts are provided by aspartate 323 and asparagine 324. Lysine 348 contacts substrate.

The protein belongs to the sulfatase family. Ca(2+) is required as a cofactor. Post-translationally, the conversion to 3-oxoalanine (also known as C-formylglycine, FGly), of a serine or cysteine residue in prokaryotes and of a cysteine residue in eukaryotes, is critical for catalytic activity.

The protein resides in the membrane. The protein is Arylsulfatase H (ARSH) of Homo sapiens (Human).